The following is a 97-amino-acid chain: Peptide YY-A (97 aa).

A signal peptide spans 1 to 28 (MAVMLKPWTVVATVLICVLLCLGTFVDA). At Y64 the chain carries Tyrosine amide. Residues 68–97 (STSEDVMAELLFGDDTEHKQRSRYDDSFMW) constitute a propeptide, C-terminal extension.

It belongs to the NPY family. As to expression, mainly expressed in brainstem neurons, and in the telencephalon. Also expressed in intestinal endocrine cells.

It is found in the secreted. The chain is Peptide YY-A (pyya) from Danio rerio (Zebrafish).